The sequence spans 1538 residues: Lhr helicase/uracil glycosylase (1538 aa).

The tract at residues 1-897 (MADNPDPSSL…ERRASVLSLD (897 aa)) is lhr-Core. ATP contacts are provided by Gln34, Lys57, Thr58, Asp179, Glu180, Ile398, Arg415, and His418. In terms of domain architecture, Helicase ATP-binding spans 38–235 (WHVAARSEHA…FLGGDRPVTV (198 aa)). Residues 179 to 182 (DEVH) carry the DEVH box motif. The 179-residue stretch at 284–462 (GILDEVLRHR…NLTPPHNPLD (179 aa)) folds into the Helicase C-terminal domain. Residues 463–552 (VLAQQTVAAA…VTSGGTIPDR (90 aa)) are beta-sheet bundle. Residues 553-623 (GMYSVLLPEG…SARLPFWRGE (71 aa)) are WH domain. The interval 624–897 (GNGRPAELGE…ERRASVLSLD (274 aa)) is domain 4. The tract at residues 898-1538 (SELLRNLLGQ…SSSPQGLDWG (641 aa)) is lhr-CTD. The tract at residues 1287–1312 (SNARTSTRRSHRARRGRPVYAQPVSP) is disordered. Over residues 1292 to 1303 (STRRSHRARRGR) the composition is skewed to basic residues.

This sequence belongs to the Lhr helicase family. As to quaternary structure, homooligomerizes, probably a homotetramer. Requires Ca(2+) as cofactor. It depends on Uracil deglycosylase activity does not require a cofactor. as a cofactor.

It catalyses the reaction Couples ATP hydrolysis with the unwinding of duplex DNA by translocating in the 3'-5' direction.. The enzyme catalyses ATP + H2O = ADP + phosphate + H(+). It carries out the reaction Hydrolyzes single-stranded DNA or mismatched double-stranded DNA and polynucleotides, releasing free uracil.. A 3'-5' helicase probably involved in DNA repair. Translocates in an ATP-dependent manner 3'-to-5' on single-stranded (ss)DNA, unwinding any encountered duplex nucleic acid. An RNA:DNA hybrid with a 3'-ssDNA loading strand is a 4.5-fold better helicase substrate than 3'-tailed double-stranded (ds)DNA; substrates where the helicase loads on a 3'-ssRNA tail (DNA:RNA and RNA:RNA) are not unwound. Unlike its M.smegmatis counterpart, the ATPase is not ssDNA-dependent. Forms a clamp around the ssDNA loading strand. In terms of biological role, excises uracil residues from DNA; forked DNA with a dU residue is the best substrate followed by ssDNA. Inactive on dsDNA with a dU residue or DNA with an 8-oxoguanine residue. Uracil residues in DNA can arise as a result of misincorporation of dUMP residues by DNA polymerase or due to deamination of cytosine. In Escherichia coli (strain K12), this protein is Lhr helicase/uracil glycosylase.